We begin with the raw amino-acid sequence, 261 residues long: Putative hydro-lyase SH0274 (261 aa).

Belongs to the D-glutamate cyclase family.

This chain is Putative hydro-lyase SH0274, found in Staphylococcus haemolyticus (strain JCSC1435).